The primary structure comprises 120 residues: NAD(P)H-quinone oxidoreductase subunit 3, chloroplastic (120 aa).

The next 3 membrane-spanning stretches (helical) occupy residues 7–27, 64–84, and 88–108; these read YETF…AFLI, MFAL…PWAM, and ILGI…IVGS.

Belongs to the complex I subunit 3 family. As to quaternary structure, NDH is composed of at least 16 different subunits, 5 of which are encoded in the nucleus.

Its subcellular location is the plastid. The protein resides in the chloroplast thylakoid membrane. The enzyme catalyses a plastoquinone + NADH + (n+1) H(+)(in) = a plastoquinol + NAD(+) + n H(+)(out). It carries out the reaction a plastoquinone + NADPH + (n+1) H(+)(in) = a plastoquinol + NADP(+) + n H(+)(out). NDH shuttles electrons from NAD(P)H:plastoquinone, via FMN and iron-sulfur (Fe-S) centers, to quinones in the photosynthetic chain and possibly in a chloroplast respiratory chain. The immediate electron acceptor for the enzyme in this species is believed to be plastoquinone. Couples the redox reaction to proton translocation, and thus conserves the redox energy in a proton gradient. In Cycas taitungensis (Prince sago), this protein is NAD(P)H-quinone oxidoreductase subunit 3, chloroplastic.